Reading from the N-terminus, the 70-residue chain is Biotin carboxyl carrier protein of acetyl-CoA carboxylase (70 aa).

A Biotinyl-binding domain is found at 1 to 69 (GTVVAPMVGL…QDGIKLFALK (69 aa)). N6-biotinyllysine is present on lysine 35.

The protein localises to the plastid. The protein resides in the chloroplast. The protein operates within lipid metabolism; fatty acid biosynthesis. In terms of biological role, this protein is a component of the acetyl coenzyme A carboxylase complex; first, biotin carboxylase catalyzes the carboxylation of the carrier protein and then the transcarboxylase transfers the carboxyl group to form malonyl-CoA. In Solanum lycopersicum (Tomato), this protein is Biotin carboxyl carrier protein of acetyl-CoA carboxylase.